Reading from the N-terminus, the 308-residue chain is Putative acetyl-hydrolase LipR (308 aa).

A signal peptide spans 1-40; it reads MNLRKNVIRSVLRGARPLFASRRLGIAGRRVLLATLTAGA. An Involved in the stabilization of the negatively charged intermediate by the formation of the oxyanion hole motif is present at residues 76-78; sequence HGG. Active-site residues include Ser146, Asp239, and His269.

It belongs to the 'GDXG' lipolytic enzyme family.

Its function is as follows. Required for maintaining the appropriate mycolic acid composition and permeability of the envelope on its exposure to acidic pH. The protein is Putative acetyl-hydrolase LipR (lipR) of Mycobacterium tuberculosis (strain ATCC 25618 / H37Rv).